The primary structure comprises 312 residues: Eukaryotic translation initiation factor 2 subunit 2 (312 aa).

2 disordered regions span residues 26-104 (AALG…NLDM) and 125-146 (ADQA…SSTW). The residue at position 44 (S44) is a Phosphoserine. Acidic residues-rich tracts occupy residues 90-102 (AASE…EINL) and 125-142 (ADQA…DEDN). Residue S133 is modified to Phosphoserine. T145 is subject to Phosphothreonine. Residues 260 to 284 (CHTCRSPETILQKDTRLFFLQCESC) form a C4-type zinc finger.

It belongs to the eIF-2-beta/eIF-5 family. As to quaternary structure, eukaryotic translation initiation factor 2 eIF2 is a heterotrimeric complex composed of an alpha, a beta and a gamma subunit.

Its subcellular location is the cytoplasm. The protein resides in the cytosol. Component of the eIF2 complex that functions in the early steps of protein synthesis by forming a ternary complex with GTP and initiator tRNA. This complex binds to a 40S ribosomal subunit, followed by mRNA binding to form a 43S pre-initiation complex (43S PIC). Junction of the 60S ribosomal subunit to form the 80S initiation complex is preceded by hydrolysis of the GTP bound to eIF2 and release of an eIF2-GDP binary complex. In order for eIF2 to recycle and catalyze another round of initiation, the GDP bound to eIF2 must exchange with GTP by way of a reaction catalyzed by eIF2B. The sequence is that of Eukaryotic translation initiation factor 2 subunit 2 from Drosophila melanogaster (Fruit fly).